The following is a 165-amino-acid chain: Transcription factor TCP16 (165 aa).

Over residues 1–11 (MDSKNGINNSQ) the composition is skewed to polar residues. 2 disordered regions span residues 1-21 (MDSK…KDRH) and 146-165 (GNAT…TTTV). The span at 12 to 21 (KARRTPKDRH) shows a compositional bias: basic residues. The TCP domain maps to 17 to 71 (PKDRHLKIGGRDRRIRIPPSVAPQLFRLTKELGFKTDGETVSWLLQNAEPAIFAA). Residues 148–165 (ATASDTTSAATTTATTTV) are compositionally biased toward low complexity.

As to expression, mostly in anther in young buds.

The protein resides in the nucleus. Its function is as follows. Required during early processes in pollen development. In Arabidopsis thaliana (Mouse-ear cress), this protein is Transcription factor TCP16 (TCP16).